The following is a 352-amino-acid chain: Molybdenum import ATP-binding protein ModC (352 aa).

The ABC transporter domain maps to 1–229; that stretch reads MLELNFSQTL…SVMNPWLPKE (229 aa). Residue 31 to 38 participates in ATP binding; that stretch reads GVSGAGKT. Positions 289-352 constitute a Mop domain; the sequence is QTSIRNVLRA…AQIKSVSITA (64 aa).

The protein belongs to the ABC transporter superfamily. Molybdate importer (TC 3.A.1.8) family. The complex is composed of two ATP-binding proteins (ModC), two transmembrane proteins (ModB) and a solute-binding protein (ModA).

The protein localises to the cell inner membrane. The enzyme catalyses molybdate(out) + ATP + H2O = molybdate(in) + ADP + phosphate + H(+). Functionally, part of the ABC transporter complex ModABC involved in molybdenum import. Responsible for energy coupling to the transport system. The chain is Molybdenum import ATP-binding protein ModC from Escherichia coli O6:H1 (strain CFT073 / ATCC 700928 / UPEC).